Consider the following 234-residue polypeptide: Urease accessory protein UreG 1 (234 aa).

The disordered stretch occupies residues Met-1–Pro-29. Gly-42–Thr-49 serves as a coordination point for GTP.

It belongs to the SIMIBI class G3E GTPase family. UreG subfamily. Homodimer. UreD, UreF and UreG form a complex that acts as a GTP-hydrolysis-dependent molecular chaperone, activating the urease apoprotein by helping to assemble the nickel containing metallocenter of UreC. The UreE protein probably delivers the nickel.

The protein localises to the cytoplasm. Facilitates the functional incorporation of the urease nickel metallocenter. This process requires GTP hydrolysis, probably effectuated by UreG. The protein is Urease accessory protein UreG 1 of Streptomyces griseus subsp. griseus (strain JCM 4626 / CBS 651.72 / NBRC 13350 / KCC S-0626 / ISP 5235).